The sequence spans 215 residues: Protein-methionine-sulfoxide reductase heme-binding subunit MsrQ (215 aa).

6 helical membrane-spanning segments follow: residues 17–37 (AAIWSLYVIGLCPGLWYFYLA), 50–70 (FEHLLGIWALRFLCLGLLVTP), 85–105 (ALGLIAFYYVLAHFTVYLVLD), 121–141 (PYIMLGMAGLIILIPLALTSN), 152–172 (WNTLHKLVYLVLIVGVLHFVL), and 177–197 (ITLEPVFYISTMVVLLGYRLV).

Belongs to the MsrQ family. Heterodimer of a catalytic subunit (MsrP) and a heme-binding subunit (MsrQ). It depends on FMN as a cofactor. Heme b serves as cofactor.

It localises to the cell inner membrane. Part of the MsrPQ system that repairs oxidized periplasmic proteins containing methionine sulfoxide residues (Met-O), using respiratory chain electrons. Thus protects these proteins from oxidative-stress damage caused by reactive species of oxygen and chlorine generated by the host defense mechanisms. MsrPQ is essential for the maintenance of envelope integrity under bleach stress, rescuing a wide series of structurally unrelated periplasmic proteins from methionine oxidation. MsrQ provides electrons for reduction to the reductase catalytic subunit MsrP, using the quinone pool of the respiratory chain. This is Protein-methionine-sulfoxide reductase heme-binding subunit MsrQ from Agrobacterium fabrum (strain C58 / ATCC 33970) (Agrobacterium tumefaciens (strain C58)).